The chain runs to 1172 residues: Ras guanine nucleotide exchange factor W (1172 aa).

2 stretches are compositionally biased toward low complexity: residues 34–70 (PIYTNDNSNNNNNDETSSNISGSNSIQNLSLNNLNNL) and 78–87 (NSNSVNNTIS). Disordered stretches follow at residues 34–100 (PIYT…RSNT), 138–162 (KFLDQHTPPPSPKPEHLSGHLRIQQ), and 186–246 (FKRS…EIKD). Residues 194–241 (QPPQSQSQQQQQLQLQQQQQQSMPNLSLGNNINSNNNNNNGSENNDIS) show a composition bias toward low complexity. 6 consecutive transmembrane segments (helical) span residues 286–306 (IWLTIMIISIIFVLFIDDIIG), 320–340 (IMAVKCSIIGFFSIDIILNLF), 347–367 (FPGTIVFWLDLISLISIVTDI), 378–400 (VLSITVNTRIIRICGSFIRISLI), 432–452 (LTTNKIVLLALAVLFATQLLV), and 545–565 (ILHLCLTVFVILVLITINLLI). Residues 666 to 702 (LLGMLNEIDDSLQAAKEKVEEESIQNSILKKDIEDLY) adopt a coiled-coil conformation. One can recognise an N-terminal Ras-GEF domain in the interval 765–903 (DLNVIQYATI…YIDSIHKRKM (139 aa)). A Ras-GEF domain is found at 938 to 1170 (DISDIAIQIT…WKMSLSCEQR (233 aa)).

It is found in the membrane. In terms of biological role, promotes the exchange of Ras-bound GDP by GTP. This chain is Ras guanine nucleotide exchange factor W (gefW), found in Dictyostelium discoideum (Social amoeba).